The chain runs to 358 residues: tRNA pseudouridine synthase D (358 aa).

Asp84 acts as the Nucleophile in catalysis. The 152-residue stretch at Gly161–Asp312 folds into the TRUD domain.

The protein belongs to the pseudouridine synthase TruD family.

The enzyme catalyses uridine(13) in tRNA = pseudouridine(13) in tRNA. In terms of biological role, responsible for synthesis of pseudouridine from uracil-13 in transfer RNAs. This is tRNA pseudouridine synthase D from Nitrosococcus oceani (strain ATCC 19707 / BCRC 17464 / JCM 30415 / NCIMB 11848 / C-107).